The sequence spans 162 residues: Phosphopantetheine adenylyltransferase (162 aa).

T9 lines the substrate pocket. ATP contacts are provided by residues 9 to 10 (TF) and H17. Residues K41, L73, and R87 each contribute to the substrate site. ATP-binding positions include 88-90 (GLR), E98, and 123-129 (FAFLSST).

The protein belongs to the bacterial CoaD family. Homohexamer. Mg(2+) is required as a cofactor.

It is found in the cytoplasm. The enzyme catalyses (R)-4'-phosphopantetheine + ATP + H(+) = 3'-dephospho-CoA + diphosphate. Its pathway is cofactor biosynthesis; coenzyme A biosynthesis; CoA from (R)-pantothenate: step 4/5. Reversibly transfers an adenylyl group from ATP to 4'-phosphopantetheine, yielding dephospho-CoA (dPCoA) and pyrophosphate. This is Phosphopantetheine adenylyltransferase from Vibrio atlanticus (strain LGP32) (Vibrio splendidus (strain Mel32)).